The sequence spans 315 residues: MTRGKPGRAHKQAATGEHGLVIAAHGRHYLVERDGGGFLQCFPRGKRSECAVGDRVVYEATAVDQGVVVRVDERRNLLYRSDQFKSKVLAANLDQVIIMLGTEPSFSEDLLGRALVAAESLGITPLILLNKIDLTARLETARSRLALYRDLGYTIVELTVHGAPEAAHAALEPHVAGRASILIGQSGMGKSSLLNLLIPGVDAQTREISEKLDSGKHTTTFTRLYHLPADWGQGGMLIDSPGFQEFGLHHLSEGMLERAFPEFRPRLTECRFYNCRHLQEPGCGILGAMAEGKIDPRRHQLYAQLLHESEQQKPW.

The CP-type G domain occupies 82–246; it reads DQFKSKVLAA…LIDSPGFQEF (165 aa). Residues 130 to 133 and 184 to 192 contribute to the GTP site; these read NKID and GQSGMGKSS. The Zn(2+) site is built by cysteine 270, cysteine 275, histidine 277, and cysteine 283.

The protein belongs to the TRAFAC class YlqF/YawG GTPase family. RsgA subfamily. Monomer. Associates with 30S ribosomal subunit, binds 16S rRNA. Zn(2+) serves as cofactor.

It is found in the cytoplasm. Its function is as follows. One of several proteins that assist in the late maturation steps of the functional core of the 30S ribosomal subunit. Helps release RbfA from mature subunits. May play a role in the assembly of ribosomal proteins into the subunit. Circularly permuted GTPase that catalyzes slow GTP hydrolysis, GTPase activity is stimulated by the 30S ribosomal subunit. This Ralstonia pickettii (strain 12J) protein is Small ribosomal subunit biogenesis GTPase RsgA.